A 501-amino-acid chain; its full sequence is MLO-like protein 5 (501 aa).

The Extracellular segment spans residues 1-22 (MAGGGGGSTSGEGPRELDQTPT). A helical transmembrane segment spans residues 23-43 (WAVSTVCGVIILISIVLELMI). Residues 44–68 (HKIGEVFTERRKKALYEALQKIKNE) lie on the Cytoplasmic side of the membrane. A helical membrane pass occupies residues 69 to 89 (LMVLGFISLLLTFGQNYIASL). Over 90 to 151 (CVASRYGHAM…ISLNALHQVH (62 aa)) the chain is Extracellular. A helical transmembrane segment spans residues 152 to 172 (IFIFFLAVFHVIYSAITMMLG). The Cytoplasmic segment spans residues 173–273 (RAKIRGWKVW…IKRSLEDDFK (101 aa)). Residues 274 to 294 (VVVGISPELWAFVMLFLLFDV) form a helical membrane-spanning segment. A topological domain (extracellular) is located at residue histidine 295. A helical transmembrane segment spans residues 296–316 (GWYVTAVITMIPPLLTLAIGT). At 317-359 (KLQAIISDMALEIQERHAVIQGMPLVNVSDRHFWFSRPALVLH) the chain is on the cytoplasmic side. Residues 360 to 380 (IIHFILFQNAFEITYFFWIWY) form a helical membrane-spanning segment. At 381–391 (EFGLRSCFHHH) the chain is on the extracellular side. The helical transmembrane segment at 392–412 (FALIIIRVALGVGVQFLCSYI) threads the bilayer. Residues 413-501 (TLPLYALVTQ…SQSRDLLSGP (89 aa)) lie on the Cytoplasmic side of the membrane. The tract at residues 443–501 (WHKNAKKKSETPGQTQPPLPNLRPKTGGDIESASPANITASVDVKESDQSQSRDLLSGP) is disordered. A calmodulin-binding region spans residues 450–471 (KSETPGQTQPPLPNLRPKTGGD). The span at 491-501 (QSQSRDLLSGP) shows a compositional bias: polar residues.

The protein belongs to the MLO family.

Its subcellular location is the membrane. In terms of biological role, may be involved in modulation of pathogen defense and leaf cell death. Activity seems to be regulated by Ca(2+)-dependent calmodulin binding and seems not to require heterotrimeric G proteins. The sequence is that of MLO-like protein 5 (MLO5) from Arabidopsis thaliana (Mouse-ear cress).